The sequence spans 362 residues: Poly(rC)-binding protein 2 (362 aa).

2 consecutive KH domains span residues 13–75 (TLTI…FAMI) and 97–162 (PVTL…VKQI). Lys-115 is covalently cross-linked (Glycyl lysine isopeptide (Lys-Gly) (interchain with G-Cter in SUMO2)). A Phosphoserine modification is found at Ser-169. Lys-181 participates in a covalent cross-link: Glycyl lysine isopeptide (Lys-Gly) (interchain with G-Cter in SUMO2). Phosphoserine is present on residues Ser-185 and Ser-268. Residues 284 to 348 (TTSHELTIPN…ASISLAQYLI (65 aa)) form the KH 3 domain. Residue Lys-319 forms a Glycyl lysine isopeptide (Lys-Gly) (interchain with G-Cter in SUMO2) linkage. Residues Ser-361 and Ser-362 each carry the phosphoserine modification.

As to quaternary structure, identified in a mRNP complex, at least composed of DHX9, DDX3X, ELAVL1, HNRNPU, IGF2BP1, ILF3, PABPC1, PCBP2, PTBP2, STAU1, STAU2, SYNCRIP and YBX1. Interacts with IFIH1 and RNF135. Interacts with MAVS (via C-terminus) and ITCH (via WW domains). Interacts with CGAS; preventing the formation of liquid-like droplets in which CGAS is activated. Phosphorylated. The non-phosphorylated form(s) exhibited the strongest poly(rC)-binding activity.

It is found in the nucleus. The protein localises to the cytoplasm. Single-stranded nucleic acid binding protein that binds preferentially to oligo dC. Major cellular poly(rC)-binding protein. Also binds poly(rU). Acts as a negative regulator of antiviral signaling. Negatively regulates cellular antiviral responses mediated by MAVS signaling. It acts as an adapter between MAVS and the E3 ubiquitin ligase ITCH, therefore triggering MAVS ubiquitination and degradation. Negativeley regulates the cGAS-STING pathway via interaction with CGAS, preventing the formation of liquid-like droplets in which CGAS is activated. Together with PCBP1, required for erythropoiesis, possibly by regulating mRNA splicing. The sequence is that of Poly(rC)-binding protein 2 (Pcbp2) from Mus musculus (Mouse).